Here is a 195-residue protein sequence, read N- to C-terminus: MLVPTVIEQTARGERAYDIYSRLLKDRIIMLSGEINDQMANSIIAQLLFLDAQDNTKDISLYINSPGGVITSGLAIMDTMNFIKSDVSTIAIGMAASMASILLTSGTKGKRFALPNSTVLIHQPLGGAQGQQTDIQIAANEILKSRKKINEILHETTGQPLEKIQKDTERDNYLTAEEAKEYGLIDEIMVNKKSN.

Serine 97 acts as the Nucleophile in catalysis. Histidine 122 is an active-site residue.

It belongs to the peptidase S14 family. Fourteen ClpP subunits assemble into 2 heptameric rings which stack back to back to give a disk-like structure with a central cavity, resembling the structure of eukaryotic proteasomes.

Its subcellular location is the cytoplasm. The enzyme catalyses Hydrolysis of proteins to small peptides in the presence of ATP and magnesium. alpha-casein is the usual test substrate. In the absence of ATP, only oligopeptides shorter than five residues are hydrolyzed (such as succinyl-Leu-Tyr-|-NHMec, and Leu-Tyr-Leu-|-Tyr-Trp, in which cleavage of the -Tyr-|-Leu- and -Tyr-|-Trp bonds also occurs).. In terms of biological role, cleaves peptides in various proteins in a process that requires ATP hydrolysis. Has a chymotrypsin-like activity. Plays a major role in the degradation of misfolded proteins. The protein is ATP-dependent Clp protease proteolytic subunit of Lactobacillus acidophilus (strain ATCC 700396 / NCK56 / N2 / NCFM).